Consider the following 396-residue polypeptide: NADH-quinone oxidoreductase subunit D (396 aa).

It belongs to the complex I 49 kDa subunit family. NDH-1 is composed of 14 different subunits. Subunits NuoB, C, D, E, F, and G constitute the peripheral sector of the complex.

The protein resides in the cell inner membrane. The enzyme catalyses a quinone + NADH + 5 H(+)(in) = a quinol + NAD(+) + 4 H(+)(out). Functionally, NDH-1 shuttles electrons from NADH, via FMN and iron-sulfur (Fe-S) centers, to quinones in the respiratory chain. The immediate electron acceptor for the enzyme in this species is believed to be ubiquinone. Couples the redox reaction to proton translocation (for every two electrons transferred, four hydrogen ions are translocated across the cytoplasmic membrane), and thus conserves the redox energy in a proton gradient. This chain is NADH-quinone oxidoreductase subunit D, found in Methylobacterium sp. (strain 4-46).